The sequence spans 469 residues: Mitochondrial adenyl nucleotide antiporter SLC25A25 (469 aa).

Residues 1–165 (MLCLCLYVPI…LYWKHSTIFD (165 aa)) are regulatory N-terminal domain. The Mitochondrial intermembrane portion of the chain corresponds to 1–189 (MLCLCLYVPI…ERQTGMWWRH (189 aa)). EF-hand domains follow at residues 47-80 (TYRQ…QDHE), 78-113 (DHEK…LGVK), and 114-149 (ISEQ…HPVE). Residues aspartate 60, aspartate 62, aspartate 64, glutamine 66, and glutamate 71 each contribute to the Ca(2+) site. Residues 151-160 (IPEIILYWKH) are linker region. The interval 166-469 (VGENLTVPDE…LKITLGVQSR (304 aa)) is C-terminal transmembrane transporter domain. Solcar repeat units follow at residues 184 to 270 (GMWW…MKRL), 278 to 363 (LRIH…LKNT), and 375 to 463 (PGVF…LKIT). The helical transmembrane segment at 190–207 (LVAGGGAGAVSRTCTAPL) threads the bilayer. Residues 208–244 (DRLKVLMQVHASRSNNMCIVGGFTQMIREGGAKSLWR) are Mitochondrial matrix-facing. A helical membrane pass occupies residues 245 to 264 (GNGINVLKIAPESAIKFMAY). Residues 265–287 (EQMKRLVGSDQETLRIHERLVAG) lie on the Mitochondrial intermembrane side of the membrane. A helical transmembrane segment spans residues 288–301 (SLAGAIAQSSIYPM). The Mitochondrial matrix portion of the chain corresponds to 302-337 (EVLKTRMALRKTGQYSGMLDCARRILAKEGVAAFYK). Residues 338–357 (GYIPNMLGIIPYAGIDLAVY) form a helical membrane-spanning segment. The Mitochondrial intermembrane segment spans residues 358–380 (ETLKNTWLQRYAVNSADPGVFVL). A helical transmembrane segment spans residues 381-398 (LACGTISSTCGQLASYPL). Residues 399-437 (ALVRTRMQAQASIEGAPEVTMSSLFKQILRTEGAFGLYR) are Mitochondrial matrix-facing. A helical membrane pass occupies residues 438–457 (GLAPNFMKVIPAVSISYVVY). Residues 458-469 (ENLKITLGVQSR) lie on the Mitochondrial intermembrane side of the membrane.

The protein belongs to the mitochondrial carrier (TC 2.A.29) family.

The protein resides in the mitochondrion inner membrane. The catalysed reaction is Mg(2+)(out) + phosphate(in) + ATP(out) = Mg(2+)(in) + phosphate(out) + ATP(in). Its activity is regulated as follows. Activated by an increase in cytosolic calcium levels that induce a conformational change of the N-terminal regulatory domain, uncapping the channel and allowing transport. Functionally, electroneutral antiporter that most probably mediates the transport of adenyl nucleotides through the inner mitochondrial membrane. Originally identified as an ATP-magnesium/inorganic phosphate antiporter, it could have a broader specificity for adenyl nucleotides. By regulating the mitochondrial matrix adenyl nucleotide pool could adapt to changing cellular energetic demands and indirectly regulate adenyl nucleotide-dependent metabolic pathways. The sequence is that of Mitochondrial adenyl nucleotide antiporter SLC25A25 from Mus musculus (Mouse).